Consider the following 128-residue polypeptide: MFPGKVNPRMLKKMQKMMKDFGMETEDLDVRKVIFVFDDEEWVFEEPKVQVMDILGVKTYSITGKPKKIKKEKVEEEEEVKVEITEEDVELVAKQCNVSKEEARKALEECNGDIAEAILKLEEEKEEN.

Positions 8–75 constitute an NAC-A/B domain; that stretch reads PRMLKKMQKM…PKKIKKEKVE (68 aa).

The protein belongs to the NAC-alpha family. Homodimer. Interacts with the ribosome. Binds ribosomal RNA.

In terms of biological role, contacts the emerging nascent chain on the ribosome. This is Nascent polypeptide-associated complex protein from Methanocaldococcus jannaschii (strain ATCC 43067 / DSM 2661 / JAL-1 / JCM 10045 / NBRC 100440) (Methanococcus jannaschii).